A 240-amino-acid chain; its full sequence is Transcriptional regulatory protein BaeR (240 aa).

Positions 12–125 (RILIVEDEPK…EVVARVKTIL (114 aa)) constitute a Response regulatory domain. Asp61 carries the post-translational modification 4-aspartylphosphate. The ompR/PhoB-type DNA-binding region spans 131–234 (QRELQQQDAE…VYGVGYRWEA (104 aa)).

Post-translationally, phosphorylated by BaeS.

The protein resides in the cytoplasm. Member of the two-component regulatory system BaeS/BaeR. Activates the mdtABCD operon. The protein is Transcriptional regulatory protein BaeR (baeR) of Escherichia coli O6:H1 (strain CFT073 / ATCC 700928 / UPEC).